The primary structure comprises 375 residues: Chaperone protein DnaJ (375 aa).

The J domain occupies 5-70 (DYYEILGVSK…QKRAAYDQYG (66 aa)). Residues 130-208 (GVTKEIRIPT…CHGHGRVEKS (79 aa)) form a CR-type zinc finger. Residues C143, C146, C160, C163, C182, C185, C196, and C199 each coordinate Zn(2+). CXXCXGXG motif repeat units follow at residues 143-150 (CDVCHGSG), 160-167 (CPTCHGSG), 182-189 (CPHCQGRG), and 196-203 (CHKCHGHG).

The protein belongs to the DnaJ family. In terms of assembly, homodimer. Requires Zn(2+) as cofactor.

The protein localises to the cytoplasm. Functionally, participates actively in the response to hyperosmotic and heat shock by preventing the aggregation of stress-denatured proteins and by disaggregating proteins, also in an autonomous, DnaK-independent fashion. Unfolded proteins bind initially to DnaJ; upon interaction with the DnaJ-bound protein, DnaK hydrolyzes its bound ATP, resulting in the formation of a stable complex. GrpE releases ADP from DnaK; ATP binding to DnaK triggers the release of the substrate protein, thus completing the reaction cycle. Several rounds of ATP-dependent interactions between DnaJ, DnaK and GrpE are required for fully efficient folding. Also involved, together with DnaK and GrpE, in the DNA replication of plasmids through activation of initiation proteins. This Salmonella paratyphi A (strain ATCC 9150 / SARB42) protein is Chaperone protein DnaJ.